A 245-amino-acid polypeptide reads, in one-letter code: Probable phosphatase YcdX (245 aa).

Residues His-7, His-9, His-15, His-40, Glu-73, His-101, His-131, Asp-192, and His-194 each coordinate Zn(2+).

It belongs to the PHP family. In terms of assembly, homotrimer. The cofactor is Zn(2+).

This chain is Probable phosphatase YcdX, found in Salmonella arizonae (strain ATCC BAA-731 / CDC346-86 / RSK2980).